The following is a 329-amino-acid chain: Putative L-ascorbate peroxidase 6 (329 aa).

The active-site Proton acceptor is His123. His244 provides a ligand contact to heme b.

Belongs to the peroxidase family. Ascorbate peroxidase subfamily. Requires heme b as cofactor.

The enzyme catalyses L-ascorbate + H2O2 = L-dehydroascorbate + 2 H2O. In terms of biological role, plays a key role in hydrogen peroxide removal. In Arabidopsis thaliana (Mouse-ear cress), this protein is Putative L-ascorbate peroxidase 6 (APX6).